The chain runs to 72 residues: Antimicrobial peptide MeuNaTxbeta-4 (72 aa).

A signal peptide spans 1 to 5 (LIGVK). In terms of domain architecture, LCN-type CS-alpha/beta spans 7–69 (EHGYLLDKYT…LWHYETNKCN (63 aa)). 4 cysteine pairs are disulfide-bonded: cysteine 18–cysteine 68, cysteine 22–cysteine 43, cysteine 29–cysteine 50, and cysteine 33–cysteine 52.

In terms of tissue distribution, expressed by the venom gland.

It localises to the secreted. Its function is as follows. Antimicrobial peptide with weak activity against both Gram-positive and -negative bacteria. Its antibiotic activity is potentiated by other antibacterial peptides such as Meucin-49. The polypeptide is Antimicrobial peptide MeuNaTxbeta-4 (Mesobuthus eupeus (Lesser Asian scorpion)).